The following is a 419-amino-acid chain: Gamma-glutamyl phosphate reductase (419 aa).

The protein belongs to the gamma-glutamyl phosphate reductase family.

The protein localises to the cytoplasm. It carries out the reaction L-glutamate 5-semialdehyde + phosphate + NADP(+) = L-glutamyl 5-phosphate + NADPH + H(+). Its pathway is amino-acid biosynthesis; L-proline biosynthesis; L-glutamate 5-semialdehyde from L-glutamate: step 2/2. Catalyzes the NADPH-dependent reduction of L-glutamate 5-phosphate into L-glutamate 5-semialdehyde and phosphate. The product spontaneously undergoes cyclization to form 1-pyrroline-5-carboxylate. The protein is Gamma-glutamyl phosphate reductase of Caulobacter sp. (strain K31).